A 687-amino-acid chain; its full sequence is Adhesion G-protein coupled receptor G1 (687 aa).

Residues M1–S25 form the signal peptide. G26–R33 is a binding site for heparin. At G26–Y402 the chain is on the extracellular side. 2 cysteine pairs are disulfide-bonded: C35-C91 and C121-C177. N-linked (GlcNAc...) asparagine glycans are attached at residues N39, N148, and N171. L190–P200 serves as a coordination point for heparin. Residues D224–V395 enclose the GAIN-B domain. Residues N234, N303, N324, and N341 are each glycosylated (N-linked (GlcNAc...) asparagine). Disulfide bonds link C346–C377 and C366–C379. Residues C346–V395 are GPS. The interval Y384–A397 is stachel. A helical membrane pass occupies residues L403–A423. Over A424–N442 the chain is Cytoplasmic. A helical membrane pass occupies residues L443–T463. Topologically, residues G464 to T471 are extracellular. A helical transmembrane segment spans residues S472 to Y492. The Cytoplasmic portion of the chain corresponds to N493–K512. A helical transmembrane segment spans residues L513 to V533. The Extracellular portion of the chain corresponds to N534–G570. Residues L571 to L591 traverse the membrane as a helical segment. At R592–V603 the chain is on the cytoplasmic side. A helical transmembrane segment spans residues L604–F624. At A625 to Q630 the chain is on the extracellular side. A helical transmembrane segment spans residues L631–W651. Topologically, residues Y652 to I687 are cytoplasmic. Residues S664–I687 are disordered. A compositionally biased stretch (low complexity) spans S678 to I687.

This sequence belongs to the G-protein coupled receptor 2 family. LN-TM7 subfamily. As to quaternary structure, heterodimer of 2 chains generated by proteolytic processing; the large extracellular N-terminal fragment (ADGRG1 NT) and the membrane-bound C-terminal fragment (ADGRG1-CT) predominantly remain associated and non-covalently linked. ADGRG1 NT self-associates in a trans-trans manner; the homophilic interaction enhances receptor signaling. Interacts with TGM2. Interacts with heparin; leading to the reduction of ADGRG1 shedding. Interacts with COL3A1. Part of a GPCR-tetraspanin complex at least consisting of ADGRG1, CD81, eventually CD9, and GNA11 in which CD81 is enhancing the association of ADGRG1 with GNA11. Post-translationally, autoproteolytically cleaved into 2 fragments; the large extracellular N-terminal fragment and the membroune-bound C-terminal fragment predominantly remain associated and non-covalently linked. In terms of processing, N-glycosylated. The secreted ADGRG1 N-terminal fragment is heavily glycosylated. Ubiquitinated. Undergoes polyubiquitination upon activation. As to expression, expressed in neural progenitor cells in fetal forbrain. Expressed in migrating neurons. Expressed in radial glial endfeet (at protein level). Expressed in peritubular myoid cells, Sertoli cells, and germ cells of the testis.

Its subcellular location is the cell membrane. It localises to the secreted. The protein localises to the membrane raft. With respect to regulation, forms a heterodimer of 2 chains generated by proteolytic processing that remain associated through non-covalent interactions mediated by the GAIN-B domain. In the inactivated receptor, the Stachel sequence (also named stalk) is embedded in the GAIN-B domain, where it adopts a beta-strand conformation. On activation, the Stachel moves into the 7 transmembrane region and adopts a twisted hook-shaped configuration that forms contacts within the receptor, leading to coupling of a G-alpha protein, which activates signaling. The cleaved GAIN-B and N-terminal domains can then dissociate from the rest of the receptor. Activated by the small-molecule agonist, 3-alpha-acetoxydihydrodeoxygedunin (3-alpha-DOG). In terms of biological role, adhesion G-protein coupled receptor (aGPCR) for steroid hormone 17alpha-hydroxypregnenolone (17-OH), which is involved in cell adhesion and cell-cell interactions. Ligand binding causes a conformation change that triggers signaling via guanine nucleotide-binding proteins (G proteins) and modulates the activity of downstream effectors, such as RhoA pathway. ADGRG1 is coupled to G(12) and/or G(13) G proteins (GNA12 and GNA13, respectively) and mediates the activation Rho small GTPases. Acts as a potent suppressor of ferroptosis: binding to 17-OH-binding initiates signaling that down-regulates CD36 and alleviates ferroptosis-induced liver injury. Ligand-binding also induces cell adhesion activity via association with proteins such as collagen III/COL3A1 and TGM2. Mediates cell matrix adhesion in developing neurons and hematopoietic stem cells. Involved in cortical development, specifically in maintenance of the pial basement membrane integrity and in cortical lamination: association with COL3A1 in the developing brain inhibits neuronal migration via activation of the RhoA pathway. Together with TGM2, acts as a regulator of myelination and myelin repair in oligodendrocyte precursor cells. Acts as a hemostatic sensor of shear force: G protein-coupled receptor signaling is activated in response to shear force in platelets, promoting G(13) G protein signaling, and platelet shape change and aggregation in a COL3A1-dependent manner. Acts as an inhibitor of VEGFA production thereby inhibiting angiogenesis through a signaling pathway mediated by PRKCA. Plays a role in the maintenance of hematopoietic stem cells in bone marrow niche. Plays an essential role in testis development. Functionally, adhesion G-protein coupled receptor (aGPCR) for phosphatidylserine, which is involved in microglia-mediated synapse pruning during development. Required to maintain appropriate synaptic numbers in several brain regions in a time- and circuit-dependent fashion: phosphatidylserine-binding acts as a 'eat-me' signal for apoptotic cells, leading to microglial engulfment of phosphatidylserine-positive synapses. This chain is Adhesion G-protein coupled receptor G1, found in Mus musculus (Mouse).